Here is a 37-residue protein sequence, read N- to C-terminus: Large ribosomal subunit protein bL36c (37 aa).

It belongs to the bacterial ribosomal protein bL36 family.

Its subcellular location is the plastid. In Helicosporidium sp. subsp. Simulium jonesii (Green alga), this protein is Large ribosomal subunit protein bL36c.